The chain runs to 477 residues: Ribulose bisphosphate carboxylase large chain (477 aa).

The propeptide occupies 1–2 (MS). P3 carries the post-translational modification N-acetylproline. K14 carries the N6,N6,N6-trimethyllysine modification. N123 and T173 together coordinate substrate. The active-site Proton acceptor is K175. Substrate is bound at residue K177. Residues K201, D203, and E204 each contribute to the Mg(2+) site. N6-carboxylysine is present on K201. The Proton acceptor role is filled by H294. Substrate-binding residues include R295, H327, and S379.

The protein belongs to the RuBisCO large chain family. Type I subfamily. Heterohexadecamer of 8 large chains and 8 small chains; disulfide-linked. The disulfide link is formed within the large subunit homodimers. It depends on Mg(2+) as a cofactor. In terms of processing, the disulfide bond which can form in the large chain dimeric partners within the hexadecamer appears to be associated with oxidative stress and protein turnover.

The protein localises to the plastid. The protein resides in the chloroplast. It catalyses the reaction 2 (2R)-3-phosphoglycerate + 2 H(+) = D-ribulose 1,5-bisphosphate + CO2 + H2O. The catalysed reaction is D-ribulose 1,5-bisphosphate + O2 = 2-phosphoglycolate + (2R)-3-phosphoglycerate + 2 H(+). Its function is as follows. RuBisCO catalyzes two reactions: the carboxylation of D-ribulose 1,5-bisphosphate, the primary event in carbon dioxide fixation, as well as the oxidative fragmentation of the pentose substrate in the photorespiration process. Both reactions occur simultaneously and in competition at the same active site. This Dioscorea elephantipes (Elephant's foot yam) protein is Ribulose bisphosphate carboxylase large chain.